Here is an 87-residue protein sequence, read N- to C-terminus: U14-lycotoxin-Ls1b (87 aa).

A signal peptide spans 1–20; the sequence is MNSKVFVVLLLLALSTCVLS. The region spanning 21–66 is the WAP domain; sequence EKYCPTPRNTSCKKMNIRNNCCRDSDCTSNAFCCAEPCGNFCHKAS. Intrachain disulfides connect Cys24–Cys54, Cys32–Cys58, Cys41–Cys53, Cys42–Cys80, and Cys47–Cys62.

Belongs to the venom protein 11 family. 01 (wap-1) subfamily. Post-translationally, contains 5 disulfide bonds. As to expression, expressed by the venom gland.

The protein resides in the secreted. Its function is as follows. Has antibacterial activity. This Lycosa singoriensis (Wolf spider) protein is U14-lycotoxin-Ls1b.